Reading from the N-terminus, the 426-residue chain is Mannose-6-phosphate isomerase (426 aa).

Zn(2+)-binding residues include Gln112, His114, Glu139, and His277. The active site involves Arg296.

The protein belongs to the mannose-6-phosphate isomerase type 1 family. Requires Zn(2+) as cofactor.

The protein localises to the cytoplasm. It carries out the reaction D-mannose 6-phosphate = D-fructose 6-phosphate. It functions in the pathway nucleotide-sugar biosynthesis; GDP-alpha-D-mannose biosynthesis; alpha-D-mannose 1-phosphate from D-fructose 6-phosphate: step 1/2. Functionally, involved in the synthesis of the GDP-mannose and dolichol-phosphate-mannose required for a number of critical mannosyl transfer reactions. The polypeptide is Mannose-6-phosphate isomerase (PMI40) (Ogataea parapolymorpha (strain ATCC 26012 / BCRC 20466 / JCM 22074 / NRRL Y-7560 / DL-1) (Yeast)).